Reading from the N-terminus, the 388-residue chain is Na(+)/H(+) antiporter NhaA (388 aa).

A run of 11 helical transmembrane segments spans residues Gly14–Thr34, Met59–Val79, Ala95–Phe115, Gly125–Gly145, Ile154–Phe174, Leu179–Leu199, Val219–Leu239, Val254–Val274, Ile292–Leu312, Ile328–Leu348, and Trp360–Leu380.

Belongs to the NhaA Na(+)/H(+) (TC 2.A.33) antiporter family.

The protein resides in the cell inner membrane. The enzyme catalyses Na(+)(in) + 2 H(+)(out) = Na(+)(out) + 2 H(+)(in). In terms of biological role, na(+)/H(+) antiporter that extrudes sodium in exchange for external protons. The chain is Na(+)/H(+) antiporter NhaA from Salmonella paratyphi A (strain ATCC 9150 / SARB42).